The sequence spans 609 residues: Sodium- and chloride-dependent GABA transporter 2 (609 aa).

The segment covering 1-13 (MDSRASGTASNGE) has biased composition (polar residues). The disordered stretch occupies residues 1 to 23 (MDSRASGTASNGETKPVYPVMEK). The Cytoplasmic portion of the chain corresponds to 1–40 (MDSRASGTASNGETKPVYPVMEKEEEEGTLERGHWNNKME). 3 helical membrane passes run 41-61 (FVLS…FPYL), 68-88 (GAFF…VFLL), and 121-141 (IVIL…FYLF). At 142 to 206 (SSFTIDLPWG…GIQHLGALRW (65 aa)) the chain is on the extracellular side. A disulfide bridge connects residues Cys153 and Cys162. 2 N-linked (GlcNAc...) asparagine glycosylation sites follow: Asn169 and Asn173. The next 2 membrane-spanning stretches (helical) occupy residues 207–227 (ELAL…WKGV) and 233–253 (VVYF…IRGV). Residue Asn269 is glycosylated (N-linked (GlcNAc...) asparagine). The next 7 helical transmembrane spans lie at 282–302 (AGTQ…ALGS), 319–339 (FLNS…LGFM), 366–386 (VVML…VVLL), 418–438 (VLIL…LTEG), 453–473 (GMCL…VYGA), 490–510 (PLIK…TFLF), and 528–548 (WWGD…IPAW). Residues 549–609 (SLYRLGTLKG…LRLTELESHC (61 aa)) are Cytoplasmic-facing. Position 594 is a phosphothreonine (Thr594). The residue at position 598 (Ser598) is a Phosphoserine.

Belongs to the sodium:neurotransmitter symporter (SNF) (TC 2.A.22) family. SLC6A13 subfamily.

Its subcellular location is the cell membrane. The protein localises to the basolateral cell membrane. The catalysed reaction is 4-aminobutanoate(out) + chloride(out) + 2 Na(+)(out) = 4-aminobutanoate(in) + chloride(in) + 2 Na(+)(in). The enzyme catalyses taurine(out) + chloride(out) + 2 Na(+)(out) = taurine(in) + chloride(in) + 2 Na(+)(in). It catalyses the reaction beta-alanine(out) + chloride(out) + 2 Na(+)(out) = beta-alanine(in) + chloride(in) + 2 Na(+)(in). It carries out the reaction hypotaurine(out) + chloride(out) + 2 Na(+)(out) = hypotaurine(in) + chloride(in) + 2 Na(+)(in). In terms of biological role, mediates sodium- and chloride-dependent transport of gamma-aminobutyric acid (GABA). Can also mediate transport of beta-alanine, taurine and hypotaurine. This chain is Sodium- and chloride-dependent GABA transporter 2 (SLC6A13), found in Macaca fascicularis (Crab-eating macaque).